A 638-amino-acid polypeptide reads, in one-letter code: RNA exonuclease 3 (638 aa).

The tract at residues 37-136 (AQDQVLEQKE…PPRRAPKEAL (100 aa)) is disordered. Over residues 55–76 (LKLEPRPEAKETPKDDLRHVSD) the composition is skewed to basic and acidic residues. A compositionally biased stretch (polar residues) spans 77–111 (SGRSTPVKKTTAPATNAENISPVSRQPNIPKNTAT). In terms of domain architecture, Exonuclease spans 408-584 (ICFDCEMGYT…VEDALATGDL (177 aa)). Residues 612–622 (DSSSNTVSMQT) show a composition bias toward polar residues. The tract at residues 612-638 (DSSSNTVSMQTKLGEGAGAKRAREGTS) is disordered.

The protein belongs to the REXO1/REXO3 family.

The protein localises to the cytoplasm. The protein resides in the nucleus. Its function is as follows. 3' to 5' exoribonuclease required for proper 3' end maturation of MRP RNA and of the U5L snRNA. This is RNA exonuclease 3 (rex3) from Emericella nidulans (strain FGSC A4 / ATCC 38163 / CBS 112.46 / NRRL 194 / M139) (Aspergillus nidulans).